We begin with the raw amino-acid sequence, 110 residues long: Glutaredoxin-1 (110 aa).

Residues 7–110 (IKHVKDLIAE…EELLEPILAN (104 aa)) form the Glutaredoxin domain. Lysine 11 is covalently cross-linked (Glycyl lysine isopeptide (Lys-Gly) (interchain with G-Cter in ubiquitin)). Glutathione is bound by residues 24–29 (KTYCPY), glutamine 63, valine 75, and 88–89 (ND). Cysteine 27 carries the post-translational modification S-glutathionyl cysteine; alternate. A disulfide bridge links cysteine 27 with cysteine 30.

Belongs to the glutaredoxin family.

The protein resides in the cytoplasm. The protein localises to the nucleus. The enzyme catalyses 2 glutathione + H2O2 = glutathione disulfide + 2 H2O. It carries out the reaction 1-chloro-2,4-dinitrobenzene + glutathione = 2,4-dinitrophenyl-S-glutathione + chloride + H(+). It catalyses the reaction RX + glutathione = an S-substituted glutathione + a halide anion + H(+). Its function is as follows. Component of the glutathione system which performs several activities such as glutathione-dependent oxidoreductase, glutathione peroxidase and glutathione S-transferase (GST) activity. The disulfide bond functions as an electron carrier in the glutathione-dependent synthesis of deoxyribonucleotides by the enzyme ribonucleotide reductase. In addition, it is also involved in reducing cytosolic protein- and non-protein-disulfides in a coupled system with glutathione reductase. Required for resistance to reactive oxygen species (ROS) by directly reducing hydroperoxides and for the detoxification of ROS-mediated damage. GRX1 is less active as an oxidoreductase than GRX2. In Saccharomyces cerevisiae (strain ATCC 204508 / S288c) (Baker's yeast), this protein is Glutaredoxin-1 (GRX1).